A 254-amino-acid polypeptide reads, in one-letter code: 5'-nucleotidase SurE (254 aa).

Residues Asp8, Asp9, Ser39, and Asn91 each contribute to the a divalent metal cation site.

This sequence belongs to the SurE nucleotidase family. A divalent metal cation is required as a cofactor.

It localises to the cytoplasm. The enzyme catalyses a ribonucleoside 5'-phosphate + H2O = a ribonucleoside + phosphate. Functionally, nucleotidase that shows phosphatase activity on nucleoside 5'-monophosphates. This chain is 5'-nucleotidase SurE, found in Pseudoalteromonas translucida (strain TAC 125).